A 33-amino-acid polypeptide reads, in one-letter code: Photosystem II reaction center protein Psb30 (33 aa).

A helical transmembrane segment spans residues 5 to 25 (VIAQLTVLSLIVLSGPLVIIL).

It belongs to the Psb30/Ycf12 family. As to quaternary structure, PSII is composed of 1 copy each of membrane proteins PsbA, PsbB, PsbC, PsbD, PsbE, PsbF, PsbH, PsbI, PsbJ, PsbK, PsbL, PsbM, PsbT, PsbX, PsbY, PsbZ, Psb30/Ycf12, peripheral proteins of the oxygen-evolving complex and a large number of cofactors. It forms dimeric complexes.

It is found in the plastid. Its subcellular location is the chloroplast thylakoid membrane. In terms of biological role, a core subunit of photosystem II (PSII), probably helps stabilize the reaction center. The sequence is that of Photosystem II reaction center protein Psb30 from Chlorokybus atmophyticus (Soil alga).